The chain runs to 336 residues: tRNA N6-adenosine threonylcarbamoyltransferase (336 aa).

Positions 114 and 118 each coordinate Fe cation. Residues 136–140, Asp169, Gly182, Asp186, and Asn275 contribute to the substrate site; that span reads LVSGG. Position 301 (Asp301) interacts with Fe cation.

Belongs to the KAE1 / TsaD family. Requires Fe(2+) as cofactor.

It is found in the cytoplasm. The enzyme catalyses L-threonylcarbamoyladenylate + adenosine(37) in tRNA = N(6)-L-threonylcarbamoyladenosine(37) in tRNA + AMP + H(+). Its function is as follows. Required for the formation of a threonylcarbamoyl group on adenosine at position 37 (t(6)A37) in tRNAs that read codons beginning with adenine. Is involved in the transfer of the threonylcarbamoyl moiety of threonylcarbamoyl-AMP (TC-AMP) to the N6 group of A37, together with TsaE and TsaB. TsaD likely plays a direct catalytic role in this reaction. This Streptococcus pneumoniae (strain P1031) protein is tRNA N6-adenosine threonylcarbamoyltransferase.